A 159-amino-acid polypeptide reads, in one-letter code: Large ribosomal subunit protein uL30 (159 aa).

Belongs to the universal ribosomal protein uL30 family. As to quaternary structure, part of the 50S ribosomal subunit.

The protein is Large ribosomal subunit protein uL30 of Aeropyrum pernix (strain ATCC 700893 / DSM 11879 / JCM 9820 / NBRC 100138 / K1).